Consider the following 113-residue polypeptide: Large ribosomal subunit protein uL24 (113 aa).

This sequence belongs to the universal ribosomal protein uL24 family. Part of the 50S ribosomal subunit.

Its function is as follows. One of two assembly initiator proteins, it binds directly to the 5'-end of the 23S rRNA, where it nucleates assembly of the 50S subunit. Functionally, one of the proteins that surrounds the polypeptide exit tunnel on the outside of the subunit. This chain is Large ribosomal subunit protein uL24, found in Rickettsia prowazekii (strain Madrid E).